The chain runs to 198 residues: ATP-dependent Clp protease proteolytic subunit (198 aa).

The Nucleophile role is filled by Ser-98. Residue His-123 is part of the active site.

It belongs to the peptidase S14 family. Fourteen ClpP subunits assemble into 2 heptameric rings which stack back to back to give a disk-like structure with a central cavity, resembling the structure of eukaryotic proteasomes.

It is found in the cytoplasm. It catalyses the reaction Hydrolysis of proteins to small peptides in the presence of ATP and magnesium. alpha-casein is the usual test substrate. In the absence of ATP, only oligopeptides shorter than five residues are hydrolyzed (such as succinyl-Leu-Tyr-|-NHMec, and Leu-Tyr-Leu-|-Tyr-Trp, in which cleavage of the -Tyr-|-Leu- and -Tyr-|-Trp bonds also occurs).. Cleaves peptides in various proteins in a process that requires ATP hydrolysis. Has a chymotrypsin-like activity. Plays a major role in the degradation of misfolded proteins. The protein is ATP-dependent Clp protease proteolytic subunit of Ehrlichia ruminantium (strain Gardel).